Here is a 318-residue protein sequence, read N- to C-terminus: uncharacterized protein (318 aa).

It to A.aeolicus AA07 and AA34.

This is an uncharacterized protein from Aquifex aeolicus (strain VF5).